The primary structure comprises 1045 residues: Protein phosphatase Slingshot (1045 aa).

Positions 1–20 are enriched in polar residues; it reads MALVTVQRSPSVAGSCSNSD. 4 disordered regions span residues 1-35, 58-80, 143-194, and 306-325; these read MALV…GNDR, TQSE…SNNS, KVGG…DNKN, and ESRR…EKEE. Residues 66 to 80 are compositionally biased toward low complexity; that stretch reads TDSTRSSNSTQSNNS. The span at 149-174 shows a compositional bias: polar residues; the sequence is GTKSSTSPAVPTQRQLSVEQTATEAS. Basic and acidic residues predominate over residues 175-185; that stretch reads SKCDKTADKEN. A DEK-C domain is found at 324 to 379; the sequence is EETESVIKMKLKAIMMSVDLDEVTSKYIRGRLEEILDMDLGEYKSFIDAEMLVILG. The region spanning 383-524 is the Tyrosine-protein phosphatase domain; that stretch reads APTKIFEHVY…LETYSGMLDA (142 aa). C468 (phosphocysteine intermediate) is an active-site residue. Residues 529–547 are compositionally biased toward basic and acidic residues; sequence EKLQRSKSETNLKSTKDAR. Disordered stretches follow at residues 529 to 631, 699 to 799, and 1001 to 1045; these read EKLQ…PERS, SHLG…GDNR, and ACSA…SDSS. Over residues 560–569 the composition is skewed to polar residues; that stretch reads ALNQAKSKST. Basic residues predominate over residues 586–601; the sequence is MHRRSIAQKSQRRMVR. Residues 602–625 are compositionally biased toward polar residues; the sequence is RSSSTSPKTQTAVVTKQQSQSMEN. Residues 704-713 are compositionally biased toward low complexity; it reads SVSGSSSGNI. The residue at position 719 (S719) is a Phosphoserine. Positions 721-732 are enriched in low complexity; it reads CSDVFSSQVDSV. Polar residues-rich tracts occupy residues 764–774 and 1008–1021; these read TPQQQKQQSNA and KKTT…SSPV. Low complexity predominate over residues 1029–1045; the sequence is SAASNSNSSASNSSDSS.

It belongs to the protein-tyrosine phosphatase family. Interacts with actin.

It localises to the cytoplasm. Its subcellular location is the cytoskeleton. It catalyses the reaction O-phospho-L-tyrosyl-[protein] + H2O = L-tyrosyl-[protein] + phosphate. The catalysed reaction is O-phospho-L-seryl-[protein] + H2O = L-seryl-[protein] + phosphate. It carries out the reaction O-phospho-L-threonyl-[protein] + H2O = L-threonyl-[protein] + phosphate. In terms of biological role, protein phosphatase which regulates actin filament dynamics. Dephosphorylates and activates the actin binding/depolymerizing factor tsr/cofilin, which subsequently binds to actin filaments and stimulates their disassembly. Required for axon growth. This Drosophila melanogaster (Fruit fly) protein is Protein phosphatase Slingshot (ssh).